The following is a 211-amino-acid chain: Protein-L-isoaspartate O-methyltransferase (211 aa).

S60 is an active-site residue.

This sequence belongs to the methyltransferase superfamily. L-isoaspartyl/D-aspartyl protein methyltransferase family.

The protein resides in the cytoplasm. It catalyses the reaction [protein]-L-isoaspartate + S-adenosyl-L-methionine = [protein]-L-isoaspartate alpha-methyl ester + S-adenosyl-L-homocysteine. Its function is as follows. Catalyzes the methyl esterification of L-isoaspartyl residues in peptides and proteins that result from spontaneous decomposition of normal L-aspartyl and L-asparaginyl residues. It plays a role in the repair and/or degradation of damaged proteins. In Hahella chejuensis (strain KCTC 2396), this protein is Protein-L-isoaspartate O-methyltransferase.